The chain runs to 103 residues: Cell division protein FtsB (103 aa).

Over 1 to 3 (MGK) the chain is Cytoplasmic. A helical transmembrane segment spans residues 4 to 21 (LTLLLLAILVWLQYSLWF). Over 22 to 103 (GKNGIHDYTR…RAQSAGQNNR (82 aa)) the chain is Periplasmic. The stretch at 28 to 71 (DYTRVNDDVAALQATNAKLKARNDQLFAEIDDLNGGQEALEERA) forms a coiled coil.

The protein belongs to the FtsB family. Part of a complex composed of FtsB, FtsL and FtsQ.

The protein resides in the cell inner membrane. Its function is as follows. Essential cell division protein. May link together the upstream cell division proteins, which are predominantly cytoplasmic, with the downstream cell division proteins, which are predominantly periplasmic. The polypeptide is Cell division protein FtsB (Shigella flexneri serotype 5b (strain 8401)).